Consider the following 203-residue polypeptide: Glycerol-3-phosphate acyltransferase (203 aa).

The next 5 membrane-spanning stretches (helical) occupy residues 4–24 (IAPG…AILV), 56–76 (VAVL…AYML), 80–100 (PFWL…PVFF), 112–132 (FGAI…TWLL), and 138–158 (GYSS…VWWF).

The protein belongs to the PlsY family. Probably interacts with PlsX.

It is found in the cell inner membrane. The enzyme catalyses an acyl phosphate + sn-glycerol 3-phosphate = a 1-acyl-sn-glycero-3-phosphate + phosphate. Its pathway is lipid metabolism; phospholipid metabolism. Its function is as follows. Catalyzes the transfer of an acyl group from acyl-phosphate (acyl-PO(4)) to glycerol-3-phosphate (G3P) to form lysophosphatidic acid (LPA). This enzyme utilizes acyl-phosphate as fatty acyl donor, but not acyl-CoA or acyl-ACP. This is Glycerol-3-phosphate acyltransferase from Enterobacter sp. (strain 638).